An 868-amino-acid chain; its full sequence is Coatomer subunit gamma (868 aa).

The span at 1–11 (MWRTKRGRTRR) shows a compositional bias: basic residues. The segment at 1–22 (MWRTKRGRTRRRDAGGNPWQNL) is disordered. HEAT repeat units lie at residues 64–101 (REATECFFAMTKLFQSKDVVMRRMVYLGIKELSPIADD), 287–324 (RELSTAVSILQLFCGSSKATLRFAAVRTMNKVAMLHPP), 326–359 (VNVCNLDLEGLIADSNRSVATLAITTLLKTGAES), and 360–396 (SVERLMKQIATFVAEISDEFKLVVVQAIRSLCTKFPR).

This sequence belongs to the COPG family. In terms of assembly, oligomeric complex that consists of at least the alpha, beta, beta', gamma, delta, epsilon and zeta subunits.

The protein resides in the cytoplasm. It is found in the golgi apparatus membrane. Its subcellular location is the cytoplasmic vesicle. It localises to the COPI-coated vesicle membrane. The protein localises to the endoplasmic reticulum. The coatomer is a cytosolic protein complex that binds to dilysine motifs and reversibly associates with Golgi non-clathrin-coated vesicles, which further mediate biosynthetic protein transport from the ER, via the Golgi up to the trans Golgi network. Coatomer complex is required for budding from Golgi membranes, and is essential for the retrograde Golgi-to-ER transport of dilysine-tagged proteins. This Anopheles gambiae (African malaria mosquito) protein is Coatomer subunit gamma.